A 396-amino-acid polypeptide reads, in one-letter code: Elongation factor Tu (396 aa).

Positions 10-205 (KPHVNIGTIG…ACDESIPDPV (196 aa)) constitute a tr-type G domain. Residues 19-26 (GHVDHGKT) form a G1 region. 19–26 (GHVDHGKT) contributes to the GTP binding site. Thr-26 contributes to the Mg(2+) binding site. Residues 62 to 66 (GITIN) are G2. A G3 region spans residues 83 to 86 (DAPG). Residues 83–87 (DAPGH) and 138–141 (NKCD) contribute to the GTP site. Residues 138-141 (NKCD) are G4. The segment at 175–177 (SAL) is G5.

It belongs to the TRAFAC class translation factor GTPase superfamily. Classic translation factor GTPase family. EF-Tu/EF-1A subfamily. In terms of assembly, monomer.

The protein localises to the cytoplasm. It carries out the reaction GTP + H2O = GDP + phosphate + H(+). Functionally, GTP hydrolase that promotes the GTP-dependent binding of aminoacyl-tRNA to the A-site of ribosomes during protein biosynthesis. In Corynebacterium kroppenstedtii (strain DSM 44385 / JCM 11950 / CIP 105744 / CCUG 35717), this protein is Elongation factor Tu.